Here is a 3075-residue protein sequence, read N- to C-terminus: MVQNTDNNTYNQLIRDINDYDDAGSSGDVAVIGIGLRFPSGSLKESISKPNQLFNELLNGLDGIVTTSERWSDNYFLNGEIASKFAGLLPLDEWKQFDPIFFAINPSNDNVSSIDPQQRFLLKCVWEALEDSGIDPISLRGTNTSTFIGSSTIDYNNLQKSSFETQNNIFGSSTHSVANRIGYCFDFRGENLTIDTACSSSSNAINCGYNSIKSNKSNVSIVGGVNFILDPHISKSFTQLGLLSPTGRCHTFSSDADGYVRSEGVGIVVLKKLKDAIKDSNNIYCVIKGSSSNIDGNFDKLNFYSPSKSSQYENIKLAIKSTNGQINESDIDYCETHGTGTPTGDPIELEGISRVFNKAPATTNNNHKQVLIGSIKSNIGHTEACSGVASLIKCCLMFKNKLFLQNINFKEPNPLINFKEWGLKVVTEPIKFNENKSTVMLINNFGVTGSNVCLILSEFKNNLSRYGNGNGYHKMEIDNNLNEKKKYLIPLSSNSSTSLNNYKSSIIKHSNSNSSPTTTSFKEFVYNQIKFKSTSLIQKSVIIASDWNEFQDESNQIKLNNSDNLISNITVEKKKSPITVMVLCGQGSQYNKMALSLYDNEPIFRESVNRFDKELFKYYGYSVLDKLRSIDDKDLISIHQPILAQPANVIIQVSLYELYKHWGVSADIIIGHSLGEVSSPYCSGMIDFQTLCYLTYHRSVAQNRTTGTGRMLSVNISSDEFINKYQSTTKYKSLEIACYNSPTSIVIAGNEDLLNEITNEFKSNDIFCSMLGSLSSFHTSSQQMIKDEVCSLNISSKQPSIAVFSTVTTNLFNHQTSPFNANYVFDNIIQPVYFTQTITNLYKHIESNDMGNEITFIEVSPHPTLQYYLNQMKSTQSSYFNNGKNITIYSPLNKKKNDYNEFLKTISLLYVNNNFDINFKSQLINDNNNISNTTKLNNLPLYQWDDKEYFKLNSSLEKIKSEGPSINNLGNNTDSPYLSYQTFIDIKKSPFQWLKGHQVSDKFYYPGMGYVHNLLSIYPNQDITISSLEFKSPLVLTEGNNQCLQTIIAPLSKNEFNIKSHYKDQKTNQWILSSLGNFSLTKHNSITSNKLINIQSLKDKCNFTSMSKQDFYETIRIKTNLTYKGLFQGVKQCYIGNNCSLAIVSLNEIYNQKEYNHLINNNNMNTFFNAAILDTCLHGSLVAVTQPVVLDKIEAFKFYSSNIPLLNKNNNNNNSDDDSIKELYVFSDIKPRTNSQTYSVSVKVILPNGTLLVDISNVVCALVSLGSNPDSTIICKPPSNDIYTPYLQLKDSIINKPEQFKHLYSVDEFSVKEEDNQFISNELLLSLFYKHINNRSPSINLESLTTLEYNQFKQLYYNSLANENLFKFIFENLKRYSNILNHDNNHSNIKSKHEELYIRTTKIMAKQLFPLKDDDSITDTPQSLFESGFLDDFYKNSRVVQPLNNLLSEIIVETLKPILNEPIVFRILEAGGGTGSLSLLILEKICKLLNDNSTTSIINIEFTWSDVSASFFAEIKEKFSSFTNHNNLNIIYRVLDLEKPLLDQDLKASYYDFIVMSNVMHVVKKLKPTLNEIHNILTPNGQLLYIEPPYKSFYYDSIFGCFSQWWPSSDSDIELRPDRCCMKQEKWINLLNQCNYRDTIMSGNDNLLFLIQTRKPTINEIISEQSISLDQLNSFNNIILFCNNNNSNDKNRNSCSSSILDLIRSNQELKHKIININNYNEFQSWITNNQNKDDCNKTLIIFLKSIESTMNTFNFKEITFEYIQINQLILKLELSNNFKHLLLSLNSSTDNYLSSSIIGAARYFVEFPQLDLYILNYDNVSIENNQQLSLINYLINPNNNIQKEFTINNNKVYYERYCRRSNNIKSIFQSESFETNKDNLYIQLNSNLEYQLYSKKAELNSNEVEIEVKANGINYKDYLMYIGMIGTDLDIKYGKEYEIENGIGIDNPNIGNDFSGIITRLGSNVKKFKVGDQVCGIGSKTNSSHVIIDFNFIYYKPLNYNHSVSASIPSIYITSLHSIYSIGNLKSNESILIHSAAGGVGISSLDLLKSKQHQGYIFLTVGSKDKEEYLTKKYGSLITAIYSSRNKDYVYEIKNKLIELGVVEQNQQGVDIILNTLSSEYMDSNFQCLNMSGCIVDLSITHLTPNDYMTNNHYKFNMGYNNVEVVDFPSKLIKSYLKKIIKMINSNELELSVPIIEYSNNQFKDAIEYINQRKHIGKIIVNHNQDEFNRVYNNYQSNNNQIIMKHSYDISKLNIGKNILLTGQTGIVLEILKYLVKYSNHSIENIIILSKSKLKWELELLINQSKFKKDNNIKFHFNQIDIEDSNKVNQVLNQLELNENITNIDSIIHFAFMNDIGDVQQVDMNRLNNAHGAKTIGAINLHNQSINRSWNIKQFIMASSIVSIFGSDQQCCYVSACSVIDSLSKYRHSIGLPSLAINLGAISSTGFISRNNAIETMFKSSILKLFSPQLVISSLDLFIQNQHQYPNYCLSDFNFEVLPSTLTNHFLTKFDYQINISKKLSQIKSSSSGNGGDNNEIIRSTILNKICELLSIDESKINEDLQLTQYGMDSLVIVQLKNFIDNQIGHNLITIQQLQNNKINQSIEIIKSAHINNNKNKNNNNNNNLVKKEQQSLDEFIKNEIKLNESIISRPYSIKNILNNNNNKSIFLTGSTGFLGAYLLTELIKMDNISKIYCLIRNNSKLTNPIDVIINNLKKHQLIDMNKESPNQRLTKIINRTGNMSNDKLNSNIENSENNNKQISEDQLIKIIPMIGDVSKDKFGLTEQDYLKLSNECDIIINSAADLNLKSNYEESKTVNVDSINQVIKLSVSNNSSQKLIVHFSSIAVFINHQLKDGETFEETNILPNFYTTPIGYIQCKVISEKLLTNAAESRGIPSIIIRPPDIFSNPITGIGHSNDFVSLLLKVSKEIGYYPNIHKPIFTTPITTIAKTTIDLIFNENSWNQNKSKPISIYSLNGNSIEMKSIYEFLENKFNCKEIDYQEWIKLVSKSNGKSSKRYSAFHIHDNQNLLISTFKINSLFKMSNSTKELLISIGSYNHQDWEINESIILNNINSNSN.

The Ketosynthase family 3 (KS3) domain maps to 26 to 458 (SGDVAVIGIG…GSNVCLILSE (433 aa)). Residues C198, H337, and H381 each act as for beta-ketoacyl synthase activity in the active site. An acyl/malonyl transferase region spans residues 663–696 (GVSADIIIGHSLGEVSSPYCSGMIDFQTLCYLTY). Catalysis depends on S673, which acts as the For acyl/malonyl transferase activity. The segment at 963 to 1085 (GPSINNLGNN…GNFSLTKHNS (123 aa)) is N-terminal hotdog fold. Residues 963-1269 (GPSINNLGNN…CALVSLGSNP (307 aa)) enclose the PKS/mFAS DH domain. The active-site Proton acceptor; for dehydratase activity is the H997. The tract at residues 1102–1269 (NFTSMSKQDF…CALVSLGSNP (168 aa)) is C-terminal hotdog fold. D1174 (proton donor; for dehydratase activity) is an active-site residue. The Carrier domain maps to 2533-2610 (DNNEIIRSTI…QSIEIIKSAH (78 aa)). S2570 is subject to O-(pantetheine 4'-phosphoryl)serine.

It depends on pantetheine 4'-phosphate as a cofactor.

Its function is as follows. Probable polyketide synthase. May be involved in the process of cell migration. The protein is Probable polyketide synthase 30 (pks30) of Dictyostelium discoideum (Social amoeba).